The chain runs to 570 residues: Putative ABC transporter ATP-binding protein MW2603 (570 aa).

ABC transporter domains lie at 6 to 247 (ISFK…GIRE) and 304 to 537 (LELN…ASLR). Residues 40–47 (GASGSGKS) and 338–345 (GHNGAGKS) contribute to the ATP site.

Belongs to the ABC transporter superfamily.

The protein localises to the cell membrane. Probably part of an ABC transporter complex. Responsible for energy coupling to the transport system. This Staphylococcus aureus (strain MW2) protein is Putative ABC transporter ATP-binding protein MW2603.